Consider the following 145-residue polypeptide: Protein SprT-like (145 aa).

A SprT-like domain is found at 4–140 (TNYVQEVSLA…VCGNCHGKLM (137 aa)). A Zn(2+)-binding site is contributed by histidine 64. Residue glutamate 65 is part of the active site. Histidine 68 contacts Zn(2+).

The protein belongs to the SprT family. Zn(2+) serves as cofactor.

The protein localises to the cytoplasm. This chain is Protein SprT-like, found in Streptococcus pyogenes serotype M3 (strain SSI-1).